The chain runs to 474 residues: tRNA-2-methylthio-N(6)-dimethylallyladenosine synthase (474 aa).

Positions 3-120 (KKLHIKTWGC…LPEMINSVRG (118 aa)) constitute an MTTase N-terminal domain. The [4Fe-4S] cluster site is built by Cys-12, Cys-49, Cys-83, Cys-157, Cys-161, and Cys-164. In terms of domain architecture, Radical SAM core spans 143-375 (RAEGPTAFVS…QERINQQAMA (233 aa)). The 64-residue stretch at 378–441 (RRMLGTTQRI…PNSLRGKVVR (64 aa)) folds into the TRAM domain.

Belongs to the methylthiotransferase family. MiaB subfamily. In terms of assembly, monomer. [4Fe-4S] cluster serves as cofactor.

The protein localises to the cytoplasm. It catalyses the reaction N(6)-dimethylallyladenosine(37) in tRNA + (sulfur carrier)-SH + AH2 + 2 S-adenosyl-L-methionine = 2-methylsulfanyl-N(6)-dimethylallyladenosine(37) in tRNA + (sulfur carrier)-H + 5'-deoxyadenosine + L-methionine + A + S-adenosyl-L-homocysteine + 2 H(+). Functionally, catalyzes the methylthiolation of N6-(dimethylallyl)adenosine (i(6)A), leading to the formation of 2-methylthio-N6-(dimethylallyl)adenosine (ms(2)i(6)A) at position 37 in tRNAs that read codons beginning with uridine. This is tRNA-2-methylthio-N(6)-dimethylallyladenosine synthase from Salmonella enteritidis PT4 (strain P125109).